Consider the following 94-residue polypeptide: Putative FXYD domain-containing ion transport regulator 8 (94 aa).

A signal peptide spans 1-18 (MEVVLIFVYSLLVPVVLA). Topologically, residues 19–34 (SAAKEKEIDPFHYNYQ) are extracellular. The helical transmembrane segment at 35–58 (TLRIGGLVFDVVLFLVPSCHLLSH) threads the bilayer. Residues 59–94 (RCKCSFNQKPQDPGDKEAQVENFITANAKEPQKAKN) are Cytoplasmic-facing. The tract at residues 66–94 (QKPQDPGDKEAQVENFITANAKEPQKAKN) is disordered.

Belongs to the FXYD family.

Its subcellular location is the membrane. This is Putative FXYD domain-containing ion transport regulator 8 (FXYD6P3) from Homo sapiens (Human).